The following is a 936-amino-acid chain: Isoleucine--tRNA ligase (936 aa).

The 'HIGH' region signature appears at 58–68 (PYANGRAHLGT). Glu-561 serves as a coordination point for L-isoleucyl-5'-AMP. The 'KMSKS' region motif lies at 602-606 (KMSKS). Lys-605 is a binding site for ATP. The Zn(2+) site is built by Cys-899, Cys-902, Cys-919, and Cys-922.

Belongs to the class-I aminoacyl-tRNA synthetase family. IleS type 1 subfamily. Monomer. Zn(2+) is required as a cofactor.

The protein resides in the cytoplasm. It carries out the reaction tRNA(Ile) + L-isoleucine + ATP = L-isoleucyl-tRNA(Ile) + AMP + diphosphate. In terms of biological role, catalyzes the attachment of isoleucine to tRNA(Ile). As IleRS can inadvertently accommodate and process structurally similar amino acids such as valine, to avoid such errors it has two additional distinct tRNA(Ile)-dependent editing activities. One activity is designated as 'pretransfer' editing and involves the hydrolysis of activated Val-AMP. The other activity is designated 'posttransfer' editing and involves deacylation of mischarged Val-tRNA(Ile). The sequence is that of Isoleucine--tRNA ligase from Coxiella burnetii (strain Dugway 5J108-111).